Reading from the N-terminus, the 456-residue chain is Ribulose bisphosphate carboxylase large chain (456 aa).

Position 7 is an N6,N6,N6-trimethyllysine (Lys-7). Substrate contacts are provided by Asn-116 and Thr-166. Lys-168 (proton acceptor) is an active-site residue. A substrate-binding site is contributed by Lys-170. 3 residues coordinate Mg(2+): Lys-194, Asp-196, and Glu-197. Lys-194 carries the post-translational modification N6-carboxylysine. His-287 acts as the Proton acceptor in catalysis. Substrate contacts are provided by Arg-288, His-320, and Ser-372.

The protein belongs to the RuBisCO large chain family. Type I subfamily. Heterohexadecamer of 8 large chains and 8 small chains; disulfide-linked. The disulfide link is formed within the large subunit homodimers. Requires Mg(2+) as cofactor. Post-translationally, the disulfide bond which can form in the large chain dimeric partners within the hexadecamer appears to be associated with oxidative stress and protein turnover.

The protein localises to the plastid. It is found in the chloroplast. The enzyme catalyses 2 (2R)-3-phosphoglycerate + 2 H(+) = D-ribulose 1,5-bisphosphate + CO2 + H2O. The catalysed reaction is D-ribulose 1,5-bisphosphate + O2 = 2-phosphoglycolate + (2R)-3-phosphoglycerate + 2 H(+). Functionally, ruBisCO catalyzes two reactions: the carboxylation of D-ribulose 1,5-bisphosphate, the primary event in carbon dioxide fixation, as well as the oxidative fragmentation of the pentose substrate in the photorespiration process. Both reactions occur simultaneously and in competition at the same active site. The chain is Ribulose bisphosphate carboxylase large chain from Barnardia japonica (Chinese squill).